We begin with the raw amino-acid sequence, 165 residues long: Protein SprT (165 aa).

In terms of domain architecture, SprT-like spans 20 to 163 (EKLAQANLKL…RCVHCGEQLV (144 aa)). A Zn(2+)-binding site is contributed by His78. Glu79 is a catalytic residue. His82 is a Zn(2+) binding site.

Belongs to the SprT family. It depends on Zn(2+) as a cofactor.

The protein localises to the cytoplasm. The polypeptide is Protein SprT (Shigella boydii serotype 18 (strain CDC 3083-94 / BS512)).